The primary structure comprises 490 residues: Limb region 1 protein homolog (490 aa).

Residues 1-19 lie on the Extracellular side of the membrane; it reads MEGQDEVSAREQHFHSQVR. A helical transmembrane segment spans residues 20–40; that stretch reads ESTICFLLFAILYVVSYFIIT. Topologically, residues 41-62 are cytoplasmic; the sequence is RYKRKSDEQEDEDAIVNRISLF. The chain crosses the membrane as a helical span at residues 63 to 83; it reads LSTFTLAVSAGAVLLLPFSII. Residues 84–110 lie on the Extracellular side of the membrane; the sequence is SNEILLSFPQNYYIQWLNGSLIHGLWN. Residues 111–131 form a helical membrane-spanning segment; it reads LASLFSNLCLFVLMPFAFFFL. Residues 132–151 are Cytoplasmic-facing; the sequence is ESEGFAGLKKGIRARILETL. Residues 152 to 172 traverse the membrane as a helical segment; sequence VMLLLLALLILGIVWVASALI. The Extracellular segment spans residues 173–187; that stretch reads DNDAASMESLYDLWE. The chain crosses the membrane as a helical span at residues 188–208; sequence FYLPYLYSCISLMGCLLLLLC. The Cytoplasmic segment spans residues 209–291; that stretch reads TPVGLSRMFT…RKKASAWERN (83 aa). A coiled-coil region spans residues 250–287; it reads RLNGLSSSVEYNIMELEQELENVKTLKTKLERRKKASA. Residues 292–312 form a helical membrane-spanning segment; sequence LVYPAVMVLLLIETSISVLLV. Topologically, residues 313-339 are extracellular; that stretch reads ACNILCLLVDETAMPKGTRGPGIGNAS. The chain crosses the membrane as a helical span at residues 340–360; it reads LSTFGFVGAALEIILIFYLMV. The Cytoplasmic segment spans residues 361–383; sequence SSVVGFYSLRFFGNFTPKKDDTT. Residues 384-404 form a helical membrane-spanning segment; it reads MTKIIGNCVSILVLSSALPVM. Topologically, residues 405–426 are extracellular; the sequence is SRTLGITRFDLLGDFGRFNWLG. Residues 427–447 form a helical membrane-spanning segment; it reads NFYIVLSYNLLFAIVTTLCLV. Residues 448–490 are Cytoplasmic-facing; sequence RKFTSAVREELFKALGLHKLHLPNTSRDSETAKPSVNGHQKAL.

Belongs to the LIMR family. As to expression, widely expressed with strongest expression in heart and pancreas.

It is found in the membrane. In terms of biological role, putative membrane receptor. This chain is Limb region 1 protein homolog (LMBR1), found in Homo sapiens (Human).